Reading from the N-terminus, the 461-residue chain is D-phenylhydantoinase (461 aa).

A divalent metal cation contacts are provided by H59, H61, and K151. N6-carboxylysine is present on K151. Residue Y156 participates in substrate binding. The a divalent metal cation site is built by H182 and H239. S286 contacts substrate. A divalent metal cation is bound at residue D313. A substrate-binding site is contributed by N335.

This sequence belongs to the metallo-dependent hydrolases superfamily. Hydantoinase/dihydropyrimidinase family. Homotetramer. A divalent metal cation serves as cofactor. In terms of processing, carboxylation allows a single lysine to coordinate two divalent metal cations.

It catalyses the reaction D-5-phenylhydantoin + H2O = N-carbamoyl-D-phenylglycine + H(+). Functionally, catalyzes the stereospecific hydrolysis of the cyclic amide bond of D-hydantoin derivatives with an aromatic side chains at the 5'-position. Has no activity on dihydropyrimidines. The physiological function is unknown. The chain is D-phenylhydantoinase from Shigella boydii serotype 4 (strain Sb227).